We begin with the raw amino-acid sequence, 112 residues long: Large ribosomal subunit protein uL22 (112 aa).

It belongs to the universal ribosomal protein uL22 family. In terms of assembly, part of the 50S ribosomal subunit.

In terms of biological role, this protein binds specifically to 23S rRNA; its binding is stimulated by other ribosomal proteins, e.g. L4, L17, and L20. It is important during the early stages of 50S assembly. It makes multiple contacts with different domains of the 23S rRNA in the assembled 50S subunit and ribosome. The globular domain of the protein is located near the polypeptide exit tunnel on the outside of the subunit, while an extended beta-hairpin is found that lines the wall of the exit tunnel in the center of the 70S ribosome. The sequence is that of Large ribosomal subunit protein uL22 from Anaplasma marginale (strain Florida).